The primary structure comprises 449 residues: Tubulin alpha chain (449 aa).

The MREC motif signature appears at 1–4 (MREC). Glutamine 11 contacts GTP. Lysine 40 carries the N6-acetyllysine modification. The GTP site is built by glutamate 71, serine 140, glycine 144, threonine 145, threonine 179, asparagine 206, and asparagine 228. Glutamate 71 lines the Mg(2+) pocket. Glutamate 254 is an active-site residue. Positions 430 to 449 (KDYEEVGADSADAEDEGEEY) are disordered. Residues 431–449 (DYEEVGADSADAEDEGEEY) show a composition bias toward acidic residues.

The protein belongs to the tubulin family. In terms of assembly, dimer of alpha and beta chains. A typical microtubule is a hollow water-filled tube with an outer diameter of 25 nm and an inner diameter of 15 nM. Alpha-beta heterodimers associate head-to-tail to form protofilaments running lengthwise along the microtubule wall with the beta-tubulin subunit facing the microtubule plus end conferring a structural polarity. Microtubules usually have 13 protofilaments but different protofilament numbers can be found in some organisms and specialized cells. It depends on Mg(2+) as a cofactor. Post-translationally, some glutamate residues at the C-terminus are polyglycylated, resulting in polyglycine chains on the gamma-carboxyl group. Glycylation is mainly limited to tubulin incorporated into axonemes (cilia and flagella) whereas glutamylation is prevalent in neuronal cells, centrioles, axonemes, and the mitotic spindle. Both modifications can coexist on the same protein on adjacent residues, and lowering polyglycylation levels increases polyglutamylation, and reciprocally. The precise function of polyglycylation is still unclear. Some glutamate residues at the C-terminus are polyglutamylated, resulting in polyglutamate chains on the gamma-carboxyl group. Polyglutamylation plays a key role in microtubule severing by spastin (SPAST). SPAST preferentially recognizes and acts on microtubules decorated with short polyglutamate tails: severing activity by SPAST increases as the number of glutamates per tubulin rises from one to eight, but decreases beyond this glutamylation threshold. In terms of processing, acetylation of alpha chains at Lys-40 is located inside the microtubule lumen. This modification has been correlated with increased microtubule stability, intracellular transport and ciliary assembly. Post-translationally, undergoes a tyrosination/detyrosination cycle, the cyclic removal and re-addition of a C-terminal tyrosine residue by the enzymes tubulin tyrosine carboxypeptidase (MATCAP1, VASH1 or VASH2) and tubulin tyrosine ligase (TTL), respectively. Tyrosination promotes microtubule interaction with CAP-Gly microtubule plus-end tracking proteins. Tyrosinated tubulins regulate the initiation of dynein-driven motility. In terms of processing, detyrosination is involved in metaphase plate congression by guiding chromosomes during mitosis. Detyrosination increases microtubules-dependent mechanotransduction in dystrophic cardiac and skeletal muscle. In cardiomyocytes, detyrosinated microtubules are required to resist to contractile compression during contraction.

The protein resides in the cytoplasm. It is found in the cytoskeleton. The catalysed reaction is GTP + H2O = GDP + phosphate + H(+). Tubulin is the major constituent of microtubules, a cylinder consisting of laterally associated linear protofilaments composed of alpha- and beta-tubulin heterodimers. Microtubules grow by the addition of GTP-tubulin dimers to the microtubule end, where a stabilizing cap forms. Below the cap, tubulin dimers are in GDP-bound state, owing to GTPase activity of alpha-tubulin. The sequence is that of Tubulin alpha chain (tuba) from Xenopus laevis (African clawed frog).